A 390-amino-acid chain; its full sequence is MPVLTDPLQILQALIRCPSVTPHEAGALSTLEQFLTKMGFHVERPIFADKNTEDVENLYAKMGKEGPHLMFAGHTDVVPPGDLENWKYPPFEGVIDQGKLYGRGAVDMKGGIACFVAAFARVLEKRTIKGRVSLLITGDEEGPALNGTVKLLKWAEQKGEKWTAALVGEPTSVKTVGDVIKIGRRGSISGIMTVKGRQGHVAFPERAANPLPLASKLIQSLIQTTLDEGTENFQPSNLELTAIDTGNPAMNVIPAQATVHFNIRYNDLWTKEMLMAEIENRLALVQSKNNNGQYPYYQLEWIPSLGDVFLTKNDKLINTLSNAIKSVTGNIPECSTSGGTSDARFIKDYCPVIEFGLPGQTMHMVDECVTVDAMETLTSIYECFIVDFFA.

A Zn(2+)-binding site is contributed by His74. Residue Asp76 is part of the active site. Residue Asp107 coordinates Zn(2+). The Proton acceptor role is filled by Glu140. Zn(2+) is bound by residues Glu141, Glu169, and His363.

It belongs to the peptidase M20A family. DapE subfamily. In terms of assembly, homodimer. Zn(2+) serves as cofactor. It depends on Co(2+) as a cofactor.

It catalyses the reaction N-succinyl-(2S,6S)-2,6-diaminopimelate + H2O = (2S,6S)-2,6-diaminopimelate + succinate. The protein operates within amino-acid biosynthesis; L-lysine biosynthesis via DAP pathway; LL-2,6-diaminopimelate from (S)-tetrahydrodipicolinate (succinylase route): step 3/3. Functionally, catalyzes the hydrolysis of N-succinyl-L,L-diaminopimelic acid (SDAP), forming succinate and LL-2,6-diaminopimelate (DAP), an intermediate involved in the bacterial biosynthesis of lysine and meso-diaminopimelic acid, an essential component of bacterial cell walls. The chain is Succinyl-diaminopimelate desuccinylase from Bartonella henselae (strain ATCC 49882 / DSM 28221 / CCUG 30454 / Houston 1) (Rochalimaea henselae).